A 287-amino-acid polypeptide reads, in one-letter code: Pyridoxal kinase PdxY (287 aa).

Substrate contacts are provided by residues Ser-10 and 45 to 46; that span reads TQ. Residues Asp-112, Ala-144, Glu-149, Lys-182, and 209–212 each bind ATP; that span reads RPLV. Residue Asp-224 coordinates substrate.

It belongs to the pyridoxine kinase family. PdxY subfamily. Homodimer. Mg(2+) is required as a cofactor.

It carries out the reaction pyridoxal + ATP = pyridoxal 5'-phosphate + ADP + H(+). Its pathway is cofactor metabolism; pyridoxal 5'-phosphate salvage; pyridoxal 5'-phosphate from pyridoxal: step 1/1. Functionally, pyridoxal kinase involved in the salvage pathway of pyridoxal 5'-phosphate (PLP). Catalyzes the phosphorylation of pyridoxal to PLP. The polypeptide is Pyridoxal kinase PdxY (Shigella boydii serotype 4 (strain Sb227)).